Consider the following 1137-residue polypeptide: Isoleucine--tRNA ligase (1137 aa).

The 'HIGH' region signature appears at 50–60 (PSANGMPGIHH). The 'KMSKS' region signature appears at 688–692 (KMSKR). An ATP-binding site is contributed by Lys-691.

The protein belongs to the class-I aminoacyl-tRNA synthetase family. IleS type 2 subfamily. In terms of assembly, monomer. It depends on Zn(2+) as a cofactor.

It localises to the cytoplasm. The enzyme catalyses tRNA(Ile) + L-isoleucine + ATP = L-isoleucyl-tRNA(Ile) + AMP + diphosphate. Catalyzes the attachment of isoleucine to tRNA(Ile). As IleRS can inadvertently accommodate and process structurally similar amino acids such as valine, to avoid such errors it has two additional distinct tRNA(Ile)-dependent editing activities. One activity is designated as 'pretransfer' editing and involves the hydrolysis of activated Val-AMP. The other activity is designated 'posttransfer' editing and involves deacylation of mischarged Val-tRNA(Ile). In Porphyromonas gingivalis (strain ATCC BAA-308 / W83), this protein is Isoleucine--tRNA ligase.